Here is a 280-residue protein sequence, read N- to C-terminus: Hydroxyethylthiazole kinase (280 aa).

Position 50 (methionine 50) interacts with substrate. Residues lysine 125 and threonine 178 each coordinate ATP. Glycine 205 lines the substrate pocket.

It belongs to the Thz kinase family. Mg(2+) is required as a cofactor.

It carries out the reaction 5-(2-hydroxyethyl)-4-methylthiazole + ATP = 4-methyl-5-(2-phosphooxyethyl)-thiazole + ADP + H(+). Its pathway is cofactor biosynthesis; thiamine diphosphate biosynthesis; 4-methyl-5-(2-phosphoethyl)-thiazole from 5-(2-hydroxyethyl)-4-methylthiazole: step 1/1. In terms of biological role, catalyzes the phosphorylation of the hydroxyl group of 4-methyl-5-beta-hydroxyethylthiazole (THZ). The polypeptide is Hydroxyethylthiazole kinase (Lacticaseibacillus paracasei (strain ATCC 334 / BCRC 17002 / CCUG 31169 / CIP 107868 / KCTC 3260 / NRRL B-441) (Lactobacillus paracasei)).